A 131-amino-acid polypeptide reads, in one-letter code: D-ribose pyranase (131 aa).

His-20 serves as the catalytic Proton donor. Substrate contacts are provided by residues Asp-28, His-98, and 120–122; that span reads YAN.

It belongs to the RbsD / FucU family. RbsD subfamily. Homodecamer.

It is found in the cytoplasm. The catalysed reaction is beta-D-ribopyranose = beta-D-ribofuranose. The protein operates within carbohydrate metabolism; D-ribose degradation; D-ribose 5-phosphate from beta-D-ribopyranose: step 1/2. Catalyzes the interconversion of beta-pyran and beta-furan forms of D-ribose. This chain is D-ribose pyranase, found in Bacillus cereus (strain ATCC 10987 / NRS 248).